The chain runs to 167 residues: Swarming motility protein SwrB (167 aa).

The interval 63–105 (IENKASSASQSDEESQKSGLQTSETYQERDPVQEAENLPEHIE) is disordered. Residues 88 to 105 (YQERDPVQEAENLPEHIE) are compositionally biased toward basic and acidic residues.

In terms of biological role, required for swarming motility and for maximal sigma-D activity. This is Swarming motility protein SwrB (swrB) from Bacillus subtilis (strain 168).